Reading from the N-terminus, the 140-residue chain is ATP synthase epsilon chain (140 aa).

It belongs to the ATPase epsilon chain family. In terms of assembly, F-type ATPases have 2 components, CF(1) - the catalytic core - and CF(0) - the membrane proton channel. CF(1) has five subunits: alpha(3), beta(3), gamma(1), delta(1), epsilon(1). CF(0) has three main subunits: a, b and c.

Its subcellular location is the cell inner membrane. In terms of biological role, produces ATP from ADP in the presence of a proton gradient across the membrane. This Nitrosomonas eutropha (strain DSM 101675 / C91 / Nm57) protein is ATP synthase epsilon chain.